The primary structure comprises 460 residues: Solute carrier family 52, riboflavin transporter, member 3 (460 aa).

The Cytoplasmic portion of the chain corresponds to M1–H6. The chain crosses the membrane as a helical span at residues L7–L27. The Extracellular segment spans residues P28 to A37. The helical transmembrane segment at W38–V58 threads the bilayer. Residues T59 to E71 are Cytoplasmic-facing. The helical transmembrane segment at V72 to L92 threads the bilayer. Residues W93–S105 are Extracellular-facing. A glycan (N-linked (GlcNAc...) asparagine) is linked at N94. The chain crosses the membrane as a helical span at residues V106–F126. Topologically, residues L127 to Y137 are cytoplasmic. A helical membrane pass occupies residues L138–V158. Topologically, residues Q159–P211 are extracellular. N168 carries N-linked (GlcNAc...) asparagine glycosylation. The helical transmembrane segment at L212–L232 threads the bilayer. The Cytoplasmic portion of the chain corresponds to Q233–L291. S242 and S266 each carry phosphoserine. A helical transmembrane segment spans residues A292 to V312. Residues Q313–H326 are Extracellular-facing. Residues L327–P347 traverse the membrane as a helical segment. Residues N348 to S350 lie on the Cytoplasmic side of the membrane. Residues L351–M371 traverse the membrane as a helical segment. Over A372–E387 the chain is Extracellular. C377 and C454 are joined by a disulfide. A helical transmembrane segment spans residues V388–L408. Over G409–S418 the chain is Cytoplasmic. The helical transmembrane segment at A419–F439 threads the bilayer. The Extracellular portion of the chain corresponds to P440–V460.

Belongs to the riboflavin transporter family. Within the small intestine, it is particularly expressed in the jujenum and the ileum. Almost negligible expression in the stomach, duodenum, and large intestine.

The protein localises to the cell membrane. The enzyme catalyses riboflavin(in) = riboflavin(out). Plasma membrane transporter mediating the uptake by cells of the water soluble vitamin B2/riboflavin that plays a key role in biochemical oxidation-reduction reactions of the carbohydrate, lipid, and amino acid metabolism. This is Solute carrier family 52, riboflavin transporter, member 3 (Slc52a3) from Mus musculus (Mouse).